Reading from the N-terminus, the 139-residue chain is Hydrogenase maturation factor HypA (139 aa).

His2 contacts Ni(2+). Zn(2+) is bound by residues Cys73, Cys76, Cys110, and Cys113.

The protein belongs to the HypA/HybF family.

Functionally, involved in the maturation of [NiFe] hydrogenases. Required for nickel insertion into the metal center of the hydrogenase. The polypeptide is Hydrogenase maturation factor HypA (Thermococcus onnurineus (strain NA1)).